We begin with the raw amino-acid sequence, 189 residues long: Inner membrane-spanning protein YciB (189 aa).

The next 5 membrane-spanning stretches (helical) occupy residues 3-23, 47-67, 76-96, 121-141, and 149-169; these read LLID…WGIY, IEPM…ATLL, WKPT…QLFF, WSWT…AHAF, and FKLF…ALYL.

It belongs to the YciB family.

The protein localises to the cell inner membrane. In terms of biological role, plays a role in cell envelope biogenesis, maintenance of cell envelope integrity and membrane homeostasis. The chain is Inner membrane-spanning protein YciB from Paracidovorax citrulli (strain AAC00-1) (Acidovorax citrulli).